A 257-amino-acid polypeptide reads, in one-letter code: Protein vip1 (257 aa).

The 74-residue stretch at 3-76 (NQVIVTNISP…NKIQITSEDG (74 aa)) folds into the RRM domain. The segment at 74–99 (EDGGAASTTDQGGAGGDQAARQEDKP) is disordered. Residues 75 to 84 (DGGAASTTDQ) are compositionally biased toward low complexity. 2 positions are modified to phosphoserine: S132 and S177. Positions 217–257 (ARRLADAKNQAEGTASPASSTPTAPAEKEPTAPTTESKTTE) are disordered. T230 bears the Phosphothreonine mark. Positions 230–257 (TASPASSTPTAPAEKEPTAPTTESKTTE) are enriched in low complexity. Phosphoserine is present on residues S232 and S235.

The chain is Protein vip1 (vip1) from Schizosaccharomyces pombe (strain 972 / ATCC 24843) (Fission yeast).